Reading from the N-terminus, the 237-residue chain is Early nodulin-like protein 1 (237 aa).

Positions Met-1–Ala-28 are cleaved as a signal peptide. The Phytocyanin domain maps to Tyr-29–Ala-134. The N-linked (GlcNAc...) asparagine glycan is linked to Asn-59. The cysteines at positions 85 and 122 are disulfide-linked. Residues Lys-139–Gly-215 are disordered. Low complexity-rich tracts occupy residues Pro-140–Pro-152 and Met-201–Gly-215. Ser-206 carries GPI-anchor amidated serine lipidation. Residues Leu-207 to Phe-237 constitute a propeptide, removed in mature form.

This sequence belongs to the early nodulin-like (ENODL) family. In terms of tissue distribution, expressed ubiquitously. Accumulates particularly in reproductive tissues, especially in maturing seeds.

The protein localises to the vacuole. It is found in the aleurone grain membrane. Its function is as follows. May act as a carbohydrate transporter. The sequence is that of Early nodulin-like protein 1 from Oryza sativa subsp. japonica (Rice).